Here is a 455-residue protein sequence, read N- to C-terminus: Tubulin alpha-1 chain (455 aa).

Glutamine 11, glutamate 75, serine 144, glycine 148, threonine 149, threonine 183, asparagine 210, and asparagine 232 together coordinate GTP. Glutamate 75 contributes to the Mg(2+) binding site. Glutamate 258 is a catalytic residue.

Belongs to the tubulin family. As to quaternary structure, dimer of alpha and beta chains. A typical microtubule is a hollow water-filled tube with an outer diameter of 25 nm and an inner diameter of 15 nM. Alpha-beta heterodimers associate head-to-tail to form protofilaments running lengthwise along the microtubule wall with the beta-tubulin subunit facing the microtubule plus end conferring a structural polarity. Microtubules usually have 13 protofilaments but different protofilament numbers can be found in some organisms and specialized cells. The cofactor is Mg(2+).

Its subcellular location is the cytoplasm. The protein localises to the cytoskeleton. The enzyme catalyses GTP + H2O = GDP + phosphate + H(+). Functionally, tubulin is the major constituent of microtubules, a cylinder consisting of laterally associated linear protofilaments composed of alpha- and beta-tubulin heterodimers. Microtubules grow by the addition of GTP-tubulin dimers to the microtubule end, where a stabilizing cap forms. Below the cap, tubulin dimers are in GDP-bound state, owing to GTPase activity of alpha-tubulin. This is Tubulin alpha-1 chain (nda2) from Schizosaccharomyces pombe (strain 972 / ATCC 24843) (Fission yeast).